A 399-amino-acid polypeptide reads, in one-letter code: Methylmalonic aciduria type A homolog, mitochondrial (399 aa).

The transit peptide at 1–15 directs the protein to the mitochondrion; the sequence is MVVRSLLRVSRLTSA. GTP-binding positions include 131–139, D274, and 310–312; these read GSPGVGKSS and SIM.

The protein belongs to the SIMIBI class G3E GTPase family. ArgK/MeaB subfamily.

Its subcellular location is the mitochondrion. Its function is as follows. May have GTPase activity. May also bind and hydrolyze ATP. May function as chaperone. Likely to have a role in propionyl-CoA and adenosylcobalamin metabolism. The sequence is that of Methylmalonic aciduria type A homolog, mitochondrial (mmaa-1) from Caenorhabditis elegans.